The primary structure comprises 495 residues: Angiopoietin-2 (495 aa).

Positions 1–18 (MWQIVFFTLSCDLVRAAA) are cleaved as a signal peptide. N-linked (GlcNAc...) asparagine glycans are attached at residues asparagine 88, asparagine 118, asparagine 132, asparagine 150, asparagine 239, and asparagine 303. The stretch at 165–247 (STNKLEKQIL…VNNSVLQKQQ (83 aa)) forms a coiled coil. Positions 274–494 (KEEQIIYRDC…GTTMMIRPAD (221 aa)) constitute a Fibrinogen C-terminal domain. The cysteines at positions 283 and 312 are disulfide-linked. Ca(2+)-binding residues include aspartate 428, aspartate 430, cysteine 432, and cysteine 434. 2 disulfides stabilise this stretch: cysteine 432–cysteine 434 and cysteine 436–cysteine 449.

In terms of assembly, interacts with TEK/TIE2, competing for the same binding site as ANGPT1. Interacts with ITGA5. Interacts with SVEP1/polydom. Interacts with THBD; this interaction significantly inhibits the generation of activated PC and TAFIa/CPB2 by the thrombin/thrombomodulin complex.

The protein localises to the secreted. Binds to TEK/TIE2, competing for the ANGPT1 binding site, and modulating ANGPT1 signaling. Can induce tyrosine phosphorylation of TEK/TIE2 in the absence of ANGPT1. In the absence of angiogenic inducers, such as VEGF, ANGPT2-mediated loosening of cell-matrix contacts may induce endothelial cell apoptosis with consequent vascular regression. In concert with VEGF, it may facilitate endothelial cell migration and proliferation, thus serving as a permissive angiogenic signal. Involved in the regulation of lymphangiogenesis. The chain is Angiopoietin-2 (ANGPT2) from Canis lupus familiaris (Dog).